Reading from the N-terminus, the 272-residue chain is D-aminoacyl-tRNA deacylase (272 aa).

This sequence belongs to the DtdA deacylase family. As to quaternary structure, monomer. Requires Zn(2+) as cofactor.

It catalyses the reaction a D-aminoacyl-tRNA + H2O = a tRNA + a D-alpha-amino acid + H(+). It carries out the reaction glycyl-tRNA(Ala) + H2O = tRNA(Ala) + glycine + H(+). Its function is as follows. D-aminoacyl-tRNA deacylase with broad substrate specificity. By recycling D-aminoacyl-tRNA to D-amino acids and free tRNA molecules, this enzyme counteracts the toxicity associated with the formation of D-aminoacyl-tRNA entities in vivo. In Thermococcus onnurineus (strain NA1), this protein is D-aminoacyl-tRNA deacylase.